The chain runs to 201 residues: UPF0301 protein MAP_0045 (201 aa).

Belongs to the UPF0301 (AlgH) family.

The polypeptide is UPF0301 protein MAP_0045 (Mycolicibacterium paratuberculosis (strain ATCC BAA-968 / K-10) (Mycobacterium paratuberculosis)).